Reading from the N-terminus, the 270-residue chain is Probable inner membrane protein BTH_II0599 (270 aa).

Transmembrane regions (helical) follow at residues 24 to 44 (RNPLAFVTLFFTYLLAMMLVS), 45 to 65 (LVPVIGAALPLLLIPGIAVGF), 98 to 118 (LLTLGGLYIVSMAAVFACSAL), 150 to 170 (ALIAAALYAPVAMMFWFAPVL), 198 to 218 (VYGLLWFALALGVSFGLAALM), and 226 to 246 (YALMVMMPASIVITAMLYCSF).

It localises to the cell inner membrane. Its function is as follows. (Microbial infection) Probably transports the toxic C-terminal region of CdiA-2 from B.pseudomallei strain 1026b across the inner membrane to the cytoplasm, where CdiA has a toxic effect. Expression in E.coli makes the bacteria sensitive to the tRNase domain of B.pseudomallei strain 1026b CdiA-2. This Burkholderia thailandensis (strain ATCC 700388 / DSM 13276 / CCUG 48851 / CIP 106301 / E264) protein is Probable inner membrane protein BTH_II0599.